Consider the following 56-residue polypeptide: Small ribosomal subunit protein uS14 (56 aa).

The Zn(2+) site is built by C21, C24, C39, and C42.

Belongs to the universal ribosomal protein uS14 family. In terms of assembly, component of the 40S small ribosomal subunit. Zn(2+) is required as a cofactor.

Its subcellular location is the cytoplasm. The protein localises to the cytosol. It localises to the rough endoplasmic reticulum. This is Small ribosomal subunit protein uS14 (RpS29) from Lonomia obliqua (Moth).